Here is a 336-residue protein sequence, read N- to C-terminus: Aspartate carbamoyltransferase catalytic subunit (336 aa).

Carbamoyl phosphate-binding residues include R72 and T73. K100 serves as a coordination point for L-aspartate. Carbamoyl phosphate is bound by residues R122, H155, and Q158. L-aspartate-binding residues include R188 and R242. The carbamoyl phosphate site is built by G288 and P289.

It belongs to the aspartate/ornithine carbamoyltransferase superfamily. ATCase family. As to quaternary structure, heterododecamer (2C3:3R2) of six catalytic PyrB chains organized as two trimers (C3), and six regulatory PyrI chains organized as three dimers (R2).

It catalyses the reaction carbamoyl phosphate + L-aspartate = N-carbamoyl-L-aspartate + phosphate + H(+). Its pathway is pyrimidine metabolism; UMP biosynthesis via de novo pathway; (S)-dihydroorotate from bicarbonate: step 2/3. In terms of biological role, catalyzes the condensation of carbamoyl phosphate and aspartate to form carbamoyl aspartate and inorganic phosphate, the committed step in the de novo pyrimidine nucleotide biosynthesis pathway. This Lactobacillus leichmannii protein is Aspartate carbamoyltransferase catalytic subunit.